Reading from the N-terminus, the 482-residue chain is Methylenetetrahydrofolate--tRNA-(uracil-5-)-methyltransferase TrmFO (482 aa).

Gly20 to Gly25 serves as a coordination point for FAD.

Belongs to the MnmG family. TrmFO subfamily. The cofactor is FAD.

The protein resides in the cytoplasm. It carries out the reaction uridine(54) in tRNA + (6R)-5,10-methylene-5,6,7,8-tetrahydrofolate + NADH + H(+) = 5-methyluridine(54) in tRNA + (6S)-5,6,7,8-tetrahydrofolate + NAD(+). It catalyses the reaction uridine(54) in tRNA + (6R)-5,10-methylene-5,6,7,8-tetrahydrofolate + NADPH + H(+) = 5-methyluridine(54) in tRNA + (6S)-5,6,7,8-tetrahydrofolate + NADP(+). Its function is as follows. Catalyzes the folate-dependent formation of 5-methyl-uridine at position 54 (M-5-U54) in all tRNAs. The polypeptide is Methylenetetrahydrofolate--tRNA-(uracil-5-)-methyltransferase TrmFO (Rhodopseudomonas palustris (strain HaA2)).